A 555-amino-acid chain; its full sequence is CTP synthase (555 aa).

The tract at residues 1–267 (MAKYIFVTGG…GNYLTLRLGL (267 aa)) is amidoligase domain. S13 contacts CTP. Position 13 (S13) interacts with UTP. 14 to 19 (SVGKGI) is an ATP binding site. Position 54 (Y54) interacts with L-glutamine. D71 contributes to the ATP binding site. The Mg(2+) site is built by D71 and E141. CTP is bound by residues 148–150 (DIE), 188–193 (KTKPTQ), and K224. UTP contacts are provided by residues 188-193 (KTKPTQ) and K224. The Glutamine amidotransferase type-1 domain occupies 292-535 (AIALVGKYVE…IAAAAQTFRE (244 aa)). Position 354 (G354) interacts with L-glutamine. The active-site Nucleophile; for glutamine hydrolysis is the C381. Residues 382–385 (LGMQ), E406, and R463 contribute to the L-glutamine site. Residues H508 and E510 contribute to the active site.

The protein belongs to the CTP synthase family. In terms of assembly, homotetramer.

It catalyses the reaction UTP + L-glutamine + ATP + H2O = CTP + L-glutamate + ADP + phosphate + 2 H(+). The enzyme catalyses L-glutamine + H2O = L-glutamate + NH4(+). The catalysed reaction is UTP + NH4(+) + ATP = CTP + ADP + phosphate + 2 H(+). It participates in pyrimidine metabolism; CTP biosynthesis via de novo pathway; CTP from UDP: step 2/2. Allosterically activated by GTP, when glutamine is the substrate; GTP has no effect on the reaction when ammonia is the substrate. The allosteric effector GTP functions by stabilizing the protein conformation that binds the tetrahedral intermediate(s) formed during glutamine hydrolysis. Inhibited by the product CTP, via allosteric rather than competitive inhibition. Catalyzes the ATP-dependent amination of UTP to CTP with either L-glutamine or ammonia as the source of nitrogen. Regulates intracellular CTP levels through interactions with the four ribonucleotide triphosphates. The polypeptide is CTP synthase (Roseiflexus castenholzii (strain DSM 13941 / HLO8)).